We begin with the raw amino-acid sequence, 262 residues long: Thiazole synthase (262 aa).

Lysine 97 serves as the catalytic Schiff-base intermediate with DXP. Residues glycine 158, 185 to 186 (AG), and 207 to 208 (NT) each bind 1-deoxy-D-xylulose 5-phosphate. The interval 243-262 (DKAQASTPTVGQPFWHSAEY) is disordered.

This sequence belongs to the ThiG family. Homotetramer. Forms heterodimers with either ThiH or ThiS.

It is found in the cytoplasm. It carries out the reaction [ThiS sulfur-carrier protein]-C-terminal-Gly-aminoethanethioate + 2-iminoacetate + 1-deoxy-D-xylulose 5-phosphate = [ThiS sulfur-carrier protein]-C-terminal Gly-Gly + 2-[(2R,5Z)-2-carboxy-4-methylthiazol-5(2H)-ylidene]ethyl phosphate + 2 H2O + H(+). The protein operates within cofactor biosynthesis; thiamine diphosphate biosynthesis. Functionally, catalyzes the rearrangement of 1-deoxy-D-xylulose 5-phosphate (DXP) to produce the thiazole phosphate moiety of thiamine. Sulfur is provided by the thiocarboxylate moiety of the carrier protein ThiS. In vitro, sulfur can be provided by H(2)S. This Neisseria meningitidis serogroup B (strain ATCC BAA-335 / MC58) protein is Thiazole synthase.